Here is a 479-residue protein sequence, read N- to C-terminus: Phosphoglycerate kinase, glycosomal (479 aa).

Val-23, Asp-24, Phe-25, Asn-26, Arg-39, Ser-61, His-62, Gly-64, Arg-65, Arg-132, His-168, and Arg-169 together coordinate (2R)-3-phosphoglycerate. ADP-binding residues include Gly-214 and Ala-215. Gly-214 serves as a coordination point for CDP. AMP is bound by residues Ala-215 and Lys-216. Residue Ala-215 participates in ATP binding. Residue Ala-215 coordinates Mg(2+). Position 216 (Lys-216) interacts with (2R)-3-phosphoglycerate. Position 219 (Asp-219) interacts with CDP. Asp-219 contributes to the Mg(2+) binding site. Residues Lys-220 and Gly-238 each contribute to the ADP site. Residue Lys-220 coordinates AMP. Lys-220 is an ATP binding site. Gly-238 provides a ligand contact to CDP. Residues Ala-239 and Ala-311 each coordinate AMP. ATP contacts are provided by Ala-239 and Ala-311. Residues Ala-311 and Asn-335 each contribute to the ADP site. Residues Gly-336 and Phe-341 each coordinate CDP. ADP is bound by residues Phe-341, Glu-342, Asp-374, and Thr-375. Glu-342 is an AMP binding site. Positions 342, 374, and 375 each coordinate ATP. Asp-374 is a Mg(2+) binding site.

The protein belongs to the phosphoglycerate kinase family. As to quaternary structure, monomer. Requires Mg(2+) as cofactor.

Its subcellular location is the glycosome. The enzyme catalyses (2R)-3-phosphoglycerate + ATP = (2R)-3-phospho-glyceroyl phosphate + ADP. It functions in the pathway carbohydrate degradation; glycolysis; pyruvate from D-glyceraldehyde 3-phosphate: step 2/5. The sequence is that of Phosphoglycerate kinase, glycosomal (PGKC) from Leishmania mexicana.